Here is a 525-residue protein sequence, read N- to C-terminus: 2,3-bisphosphoglycerate-independent phosphoglycerate mutase (525 aa).

D15 and S65 together coordinate Mn(2+). S65 acts as the Phosphoserine intermediate in catalysis. Substrate contacts are provided by residues H126, 156–157, R188, R194, 258–261, and K331; these read RD and RPDR. Mn(2+)-binding residues include D398, H402, D439, H440, and H457.

This sequence belongs to the BPG-independent phosphoglycerate mutase family. As to quaternary structure, monomer. It depends on Mn(2+) as a cofactor.

It carries out the reaction (2R)-2-phosphoglycerate = (2R)-3-phosphoglycerate. The protein operates within carbohydrate degradation; glycolysis; pyruvate from D-glyceraldehyde 3-phosphate: step 3/5. In terms of biological role, catalyzes the interconversion of 2-phosphoglycerate and 3-phosphoglycerate. The polypeptide is 2,3-bisphosphoglycerate-independent phosphoglycerate mutase (Picosynechococcus sp. (strain ATCC 27264 / PCC 7002 / PR-6) (Agmenellum quadruplicatum)).